A 286-amino-acid chain; its full sequence is UPF0761 membrane protein KPN78578_41360 (286 aa).

The next 7 membrane-spanning stretches (helical) occupy residues 44-64 (LLSL…FPMF), 74-94 (FIFA…IEQF), 104-124 (VGAF…DSAL), 140-160 (FAVY…SLAI), 183-203 (LFPL…VPTT), 210-230 (AVIG…AFAL), and 244-264 (VISV…IVLL).

Belongs to the UPF0761 family.

The protein resides in the cell inner membrane. The polypeptide is UPF0761 membrane protein KPN78578_41360 (Klebsiella pneumoniae subsp. pneumoniae (strain ATCC 700721 / MGH 78578)).